A 502-amino-acid polypeptide reads, in one-letter code: ATP synthase subunit alpha (502 aa).

169–176 (GDRQTGKT) serves as a coordination point for ATP.

The protein belongs to the ATPase alpha/beta chains family. In terms of assembly, F-type ATPases have 2 components, CF(1) - the catalytic core - and CF(0) - the membrane proton channel. CF(1) has five subunits: alpha(3), beta(3), gamma(1), delta(1), epsilon(1). CF(0) has three main subunits: a(1), b(2) and c(9-12). The alpha and beta chains form an alternating ring which encloses part of the gamma chain. CF(1) is attached to CF(0) by a central stalk formed by the gamma and epsilon chains, while a peripheral stalk is formed by the delta and b chains.

The protein resides in the cell membrane. The catalysed reaction is ATP + H2O + 4 H(+)(in) = ADP + phosphate + 5 H(+)(out). Produces ATP from ADP in the presence of a proton gradient across the membrane. The alpha chain is a regulatory subunit. The protein is ATP synthase subunit alpha of Priestia megaterium (strain ATCC 12872 / QMB1551) (Bacillus megaterium).